The primary structure comprises 270 residues: 3-methyl-2-oxobutanoate hydroxymethyltransferase (270 aa).

Mg(2+)-binding residues include aspartate 43 and aspartate 82. 3-methyl-2-oxobutanoate contacts are provided by residues 43 to 44 (DS), aspartate 82, and lysine 112. Glutamate 114 lines the Mg(2+) pocket. The Proton acceptor role is filled by glutamate 179.

The protein belongs to the PanB family. In terms of assembly, homodecamer; pentamer of dimers. Requires Mg(2+) as cofactor.

It localises to the cytoplasm. The catalysed reaction is 3-methyl-2-oxobutanoate + (6R)-5,10-methylene-5,6,7,8-tetrahydrofolate + H2O = 2-dehydropantoate + (6S)-5,6,7,8-tetrahydrofolate. It functions in the pathway cofactor biosynthesis; (R)-pantothenate biosynthesis; (R)-pantoate from 3-methyl-2-oxobutanoate: step 1/2. Its function is as follows. Catalyzes the reversible reaction in which hydroxymethyl group from 5,10-methylenetetrahydrofolate is transferred onto alpha-ketoisovalerate to form ketopantoate. This Staphylococcus saprophyticus subsp. saprophyticus (strain ATCC 15305 / DSM 20229 / NCIMB 8711 / NCTC 7292 / S-41) protein is 3-methyl-2-oxobutanoate hydroxymethyltransferase.